Here is a 264-residue protein sequence, read N- to C-terminus: Protein-lysine methyltransferase METTL21C (264 aa).

Over residues 1–10 (MDVCLSSAQQ) the composition is skewed to polar residues. Positions 1-46 (MDVCLSSAQQPGRRGEGLSSPGGWLEAEKKGAPQKDSTGGVLEESN) are disordered. Residues W92, 120–122 (GAG), D141, W172, and S193 contribute to the S-adenosyl-L-methionine site.

The protein belongs to the methyltransferase superfamily. METTL21 family. In terms of assembly, interacts with members of the heat shock protein 70 families; these proteins may possibly be methylation substrates for the enzyme.

Its subcellular location is the nucleus. The protein localises to the cytoplasm. It catalyses the reaction L-lysyl-[protein] + S-adenosyl-L-methionine = N(6)-methyl-L-lysyl-[protein] + S-adenosyl-L-homocysteine + H(+). It carries out the reaction N(6)-methyl-L-lysyl-[protein] + S-adenosyl-L-methionine = N(6),N(6)-dimethyl-L-lysyl-[protein] + S-adenosyl-L-homocysteine + H(+). The catalysed reaction is N(6),N(6)-dimethyl-L-lysyl-[protein] + S-adenosyl-L-methionine = N(6),N(6),N(6)-trimethyl-L-lysyl-[protein] + S-adenosyl-L-homocysteine + H(+). In terms of biological role, protein-lysine N-methyltransferase using S-adenosyl-L-methionine as methyl donor. Mono-di and trimethylates 'Lys-943' of AARS1. The chain is Protein-lysine methyltransferase METTL21C from Homo sapiens (Human).